The primary structure comprises 60 residues: Large ribosomal subunit protein uL30 (60 aa).

It belongs to the universal ribosomal protein uL30 family. As to quaternary structure, part of the 50S ribosomal subunit.

The protein is Large ribosomal subunit protein uL30 of Desulfitobacterium hafniense (strain DSM 10664 / DCB-2).